We begin with the raw amino-acid sequence, 122 residues long: Holo-[acyl-carrier-protein] synthase (122 aa).

Mg(2+)-binding residues include Asp-8 and Glu-52.

Belongs to the P-Pant transferase superfamily. AcpS family. Requires Mg(2+) as cofactor.

The protein localises to the cytoplasm. The catalysed reaction is apo-[ACP] + CoA = holo-[ACP] + adenosine 3',5'-bisphosphate + H(+). Transfers the 4'-phosphopantetheine moiety from coenzyme A to a Ser of acyl-carrier-protein. The protein is Holo-[acyl-carrier-protein] synthase of Lachnoclostridium phytofermentans (strain ATCC 700394 / DSM 18823 / ISDg) (Clostridium phytofermentans).